The following is a 365-amino-acid chain: Protein RecA (365 aa).

An ATP-binding site is contributed by 73–80 (GPESSGKT).

This sequence belongs to the RecA family.

It is found in the cytoplasm. Can catalyze the hydrolysis of ATP in the presence of single-stranded DNA, the ATP-dependent uptake of single-stranded DNA by duplex DNA, and the ATP-dependent hybridization of homologous single-stranded DNAs. It interacts with LexA causing its activation and leading to its autocatalytic cleavage. The protein is Protein RecA of Prochlorococcus marinus (strain MIT 9215).